The sequence spans 123 residues: Large ribosomal subunit protein uL29 (123 aa).

At K19 the chain carries N6-acetyllysine. K25 is covalently cross-linked (Glycyl lysine isopeptide (Lys-Gly) (interchain with G-Cter in SUMO2)). A Phosphoserine modification is found at S29. K43 is modified (N6-acetyllysine). A disordered region spans residues 95–114; that stretch reads LNKHEENLKTKKQQRKERLY.

Belongs to the universal ribosomal protein uL29 family. In terms of assembly, component of the large ribosomal subunit.

Its subcellular location is the cytoplasm. Its function is as follows. Component of the large ribosomal subunit. The ribosome is a large ribonucleoprotein complex responsible for the synthesis of proteins in the cell. In Bos taurus (Bovine), this protein is Large ribosomal subunit protein uL29 (RPL35).